Consider the following 529-residue polypeptide: Membrane-bound lytic murein transglycosylase F (529 aa).

An N-terminal signal peptide occupies residues 1–27; sequence MPIFNLHQLRNFLFIIATTLFLSACQI. The tract at residues 28–287 is non-LT domain; the sequence is ESKPTSELDQ…RLEEKYIGHI (260 aa). Positions 288 to 529 are LT domain; that stretch reads GSFDYVDTRA…QATLTTEVQP (242 aa). Glutamate 332 is an active-site residue. Positions 510 to 529 are disordered; sequence EALSPDVGVSQATLTTEVQP. Over residues 519–529 the composition is skewed to polar residues; that stretch reads SQATLTTEVQP.

In the N-terminal section; belongs to the bacterial solute-binding protein 3 family. This sequence in the C-terminal section; belongs to the transglycosylase Slt family.

It is found in the cell outer membrane. The enzyme catalyses Exolytic cleavage of the (1-&gt;4)-beta-glycosidic linkage between N-acetylmuramic acid (MurNAc) and N-acetylglucosamine (GlcNAc) residues in peptidoglycan, from either the reducing or the non-reducing ends of the peptidoglycan chains, with concomitant formation of a 1,6-anhydrobond in the MurNAc residue.. In terms of biological role, murein-degrading enzyme that degrades murein glycan strands and insoluble, high-molecular weight murein sacculi, with the concomitant formation of a 1,6-anhydromuramoyl product. Lytic transglycosylases (LTs) play an integral role in the metabolism of the peptidoglycan (PG) sacculus. Their lytic action creates space within the PG sacculus to allow for its expansion as well as for the insertion of various structures such as secretion systems and flagella. The polypeptide is Membrane-bound lytic murein transglycosylase F (Vibrio vulnificus (strain CMCP6)).